The sequence spans 394 residues: MAEKRDYYEVLEVTKESTVEEIKKAYRKKAIQYHPDKNPGDKEAEEKFKEAAEAYDVLSNPDKRARYDQFGHAGMSGAAGNGGPFGGFSGGMSMDDIFSMFGDIFGGHSGGGFGGGFGGFGGFGGGGSQQRKFRGSDLRVKVKLNLKEISTGVEKKFKLKKYIPCSHCHGTGAEGNSGSETCPTCKGSGSVIRNQQTILGTMQTRTTCPTCNGEGKIIKDKCKVCGGEGIEYGEEVVTVKIPAGVAEGMQLSMGGKGNAGKHNGIPGDLLILVEEEPHPELIRDENDLVYNLLLSFPTAAIGGAVEIPTIDGKVKVKIEAGTQPGKVLRLRGKGLPSVNGYGTGDLLVNVSVYVPETLSKEEKSTLEKLEESKNFKPSTSIKEKIFKKFRSLFD.

A J domain is found at 6 to 71 (DYYEVLEVTK…DKRARYDQFG (66 aa)). The segment at 152–234 (GVEKKFKLKK…CGGEGIEYGE (83 aa)) adopts a CR-type zinc-finger fold. Zn(2+)-binding residues include Cys165, Cys168, Cys182, Cys185, Cys208, Cys211, Cys222, and Cys225. 4 CXXCXGXG motif repeats span residues 165-172 (CSHCHGTG), 182-189 (CPTCKGSG), 208-215 (CPTCNGEG), and 222-229 (CKVCGGEG).

This sequence belongs to the DnaJ family. As to quaternary structure, homodimer. Requires Zn(2+) as cofactor.

The protein localises to the cytoplasm. Its function is as follows. Participates actively in the response to hyperosmotic and heat shock by preventing the aggregation of stress-denatured proteins and by disaggregating proteins, also in an autonomous, DnaK-independent fashion. Unfolded proteins bind initially to DnaJ; upon interaction with the DnaJ-bound protein, DnaK hydrolyzes its bound ATP, resulting in the formation of a stable complex. GrpE releases ADP from DnaK; ATP binding to DnaK triggers the release of the substrate protein, thus completing the reaction cycle. Several rounds of ATP-dependent interactions between DnaJ, DnaK and GrpE are required for fully efficient folding. Also involved, together with DnaK and GrpE, in the DNA replication of plasmids through activation of initiation proteins. The polypeptide is Chaperone protein DnaJ (Bacteroides fragilis (strain YCH46)).